The following is a 155-amino-acid chain: Small ribosomal subunit protein uS7c (155 aa).

This sequence belongs to the universal ribosomal protein uS7 family. Part of the 30S ribosomal subunit.

Its subcellular location is the plastid. The protein localises to the chloroplast. In terms of biological role, one of the primary rRNA binding proteins, it binds directly to 16S rRNA where it nucleates assembly of the head domain of the 30S subunit. The sequence is that of Small ribosomal subunit protein uS7c (rps7) from Pinus thunbergii (Japanese black pine).